We begin with the raw amino-acid sequence, 234 residues long: Purine nucleoside phosphorylase DeoD-type (234 aa).

H4 lines the a purine D-ribonucleoside pocket. Phosphate contacts are provided by residues G20, R24, R43, and 87 to 90 (RVGT). Residues E162, 178–180 (EME), and 202–203 (SD) contribute to the a purine D-ribonucleoside site. D203 functions as the Proton donor in the catalytic mechanism.

This sequence belongs to the PNP/UDP phosphorylase family. As to quaternary structure, homohexamer; trimer of homodimers.

The enzyme catalyses a purine D-ribonucleoside + phosphate = a purine nucleobase + alpha-D-ribose 1-phosphate. The catalysed reaction is a purine 2'-deoxy-D-ribonucleoside + phosphate = a purine nucleobase + 2-deoxy-alpha-D-ribose 1-phosphate. Catalyzes the reversible phosphorolytic breakdown of the N-glycosidic bond in the beta-(deoxy)ribonucleoside molecules, with the formation of the corresponding free purine bases and pentose-1-phosphate. The protein is Purine nucleoside phosphorylase DeoD-type of Anoxybacillus flavithermus (strain DSM 21510 / WK1).